Consider the following 471-residue polypeptide: Abscisic acid 8'-hydroxylase 1 (471 aa).

The chain crosses the membrane as a helical span at residues 1–21; sequence MGAFLLFVCVLAPFLLVCAVR. Residue Cys415 participates in heme binding.

This sequence belongs to the cytochrome P450 family. It depends on heme as a cofactor. In terms of tissue distribution, in seedlings and expanding leaves.

It is found in the membrane. The catalysed reaction is 2-cis-(+)-abscisate + reduced [NADPH--hemoprotein reductase] + O2 = (+)-8'-hydroxyabscisate + oxidized [NADPH--hemoprotein reductase] + H2O + H(+). The protein operates within plant hormone degradation; abscisic acid degradation. Its function is as follows. Involved in the oxidative degradation of abscisic acid. The polypeptide is Abscisic acid 8'-hydroxylase 1 (CYP707A5) (Oryza sativa subsp. indica (Rice)).